Consider the following 1032-residue polypeptide: Contactin-1a (1032 aa).

The N-terminal stretch at 1–31 (MIPEAFQPRAMKHTTTVLMLALSSRFWSVCA) is a signal peptide. 6 Ig-like C2-type domains span residues 46–139 (PVFE…ARVQ), 144–231 (DMFS…KSVF), 249–335 (PADI…THLY), 340–417 (PDWL…AELR), 423–510 (PSFQ…GSLS), and 515–612 (TKIT…AELV). 2 disulfide bridges follow: Cys70-Cys122 and Cys166-Cys219. Residues Asn119, Asn216, and Asn266 are each glycosylated (N-linked (GlcNAc...) asparagine). Disulfide bonds link Cys271–Cys319, Cys361–Cys401, and Cys446–Cys494. N-linked (GlcNAc...) asparagine glycosylation is found at Asn455, Asn467, Asn483, and Asn504. Cys536 and Cys596 are oxidised to a cystine. The N-linked (GlcNAc...) asparagine glycan is linked to Asn604. 4 Fibronectin type-III domains span residues 619 to 718 (PPGG…TREA), 723 to 820 (APSD…SAQD), 825 to 918 (APII…TKKS), and 920 to 1015 (PSRP…APAP). The segment at 699–729 (NTLGTGPPSEPSPKTTTREARPIVAPSDIGG) is disordered. N-linked (GlcNAc...) asparagine glycosylation is present at Asn879. The tract at residues 907–926 (ASQRNRIYTKKSPPSRPPKI) is disordered. An N-linked (GlcNAc...) asparagine glycan is attached at Asn950. Gly1010 carries GPI-anchor amidated glycine lipidation. A propeptide spans 1011–1032 (SAPAPALASALLLLPLLWTLML) (removed in mature form).

This sequence belongs to the immunoglobulin superfamily. Contactin family. As to expression, expressed in brain.

The protein localises to the cell membrane. Its function is as follows. Mediates cell surface interactions during nervous system development. The sequence is that of Contactin-1a (cntn1a) from Danio rerio (Zebrafish).